A 395-amino-acid chain; its full sequence is 8-amino-3,8-dideoxy-alpha-D-manno-octulosonate transaminase (395 aa).

Lysine 186 is subject to N6-(pyridoxal phosphate)lysine.

Belongs to the DegT/DnrJ/EryC1 family. The cofactor is pyridoxal 5'-phosphate.

It carries out the reaction 8-amino-3,8-dideoxy-alpha-D-manno-octulosonate + 2-oxoglutarate = 3,8-dideoxy-8-oxo-alpha-D-manno-octulosonate + L-glutamate. Its pathway is bacterial outer membrane biogenesis; lipopolysaccharide biosynthesis. Functionally, catalyzes the second (last) step of the biosynthesis of Kdo8N (8-amino-3,8-dideoxy-D-manno-octulosonate) from Kdo (3-deoxy-D-manno-octulosonate). The sequence is that of 8-amino-3,8-dideoxy-alpha-D-manno-octulosonate transaminase from Shewanella oneidensis (strain ATCC 700550 / JCM 31522 / CIP 106686 / LMG 19005 / NCIMB 14063 / MR-1).